The chain runs to 363 residues: Peptide chain release factor 2 (363 aa).

An N5-methylglutamine modification is found at glutamine 251.

This sequence belongs to the prokaryotic/mitochondrial release factor family. Methylated by PrmC. Methylation increases the termination efficiency of RF2.

The protein localises to the cytoplasm. Its function is as follows. Peptide chain release factor 2 directs the termination of translation in response to the peptide chain termination codons UGA and UAA. The polypeptide is Peptide chain release factor 2 (Helicobacter pylori (strain G27)).